A 206-amino-acid chain; its full sequence is Small ribosomal subunit protein uS4 (206 aa).

The S4 RNA-binding domain maps to 96–156; that stretch reads CRLDNVVYRM…EKSLNQLRIV (61 aa).

It belongs to the universal ribosomal protein uS4 family. Part of the 30S ribosomal subunit. Contacts protein S5. The interaction surface between S4 and S5 is involved in control of translational fidelity.

One of the primary rRNA binding proteins, it binds directly to 16S rRNA where it nucleates assembly of the body of the 30S subunit. Its function is as follows. With S5 and S12 plays an important role in translational accuracy. This chain is Small ribosomal subunit protein uS4, found in Pseudomonas entomophila (strain L48).